The following is a 256-amino-acid chain: MSELPGDVRAFLREHPSLRLQTDARKVRCILTGHELPCRLPELQVYTRGKKYQRLVRASPAFDYAEFEPHIVPSTKNPHQLFCKLTLRHINKCPEHVLRHTQGRRYQRALCKYEECQKQGVEYVPACLVHRRRRREDQMDGDGPRPREAFWEPTSSDEGGAASDDSMTDLYPPELFTRKDLGSTEDGDGTDDFLTDKEDEKAKPPREKATDEGRRETTVYRGLVQKRGKKQLGSLKKKFKSHHRKPKSFSSCKQPG.

The interval 133 to 256 (RRREDQMDGD…KSFSSCKQPG (124 aa)) is disordered. Residues 135–150 (REDQMDGDGPRPREAF) are compositionally biased toward basic and acidic residues. Over residues 156-165 (SDEGGAASDD) the composition is skewed to low complexity. Residues 183–193 (STEDGDGTDDF) are compositionally biased toward acidic residues. 2 positions are modified to phosphothreonine: Thr190 and Thr195. A compositionally biased stretch (basic and acidic residues) spans 194-218 (LTDKEDEKAKPPREKATDEGRRETT). Residues 224 to 247 (VQKRGKKQLGSLKKKFKSHHRKPK) are compositionally biased toward basic residues.

This sequence belongs to the SURF2 family.

The chain is Surfeit locus protein 2 (SURF2) from Homo sapiens (Human).